The primary structure comprises 118 residues: Small ribosomal subunit protein uS13 (118 aa).

The interval 91–118 is disordered; that stretch reads HRRSLPLRGQRTKNNARTRKGPKKPIKR.

This sequence belongs to the universal ribosomal protein uS13 family. As to quaternary structure, part of the 30S ribosomal subunit. Forms a loose heterodimer with protein S19. Forms two bridges to the 50S subunit in the 70S ribosome.

Located at the top of the head of the 30S subunit, it contacts several helices of the 16S rRNA. In the 70S ribosome it contacts the 23S rRNA (bridge B1a) and protein L5 of the 50S subunit (bridge B1b), connecting the 2 subunits; these bridges are implicated in subunit movement. Contacts the tRNAs in the A and P-sites. This Hydrogenovibrio crunogenus (strain DSM 25203 / XCL-2) (Thiomicrospira crunogena) protein is Small ribosomal subunit protein uS13.